Reading from the N-terminus, the 413-residue chain is Probable short/branched chain specific acyl-CoA dehydrogenase (413 aa).

FAD-binding positions include 152 to 161 (FCLSESGSGS) and 186 to 188 (WIT). S161 is a substrate binding site. Substrate-binding positions include Y208, Y262, and 270 to 273 (NEGR). FAD contacts are provided by residues R298, Q309, and 366-370 (SMLGG). The active-site Proton acceptor is the E393. An FAD-binding site is contributed by 395 to 397 (TSN).

It belongs to the acyl-CoA dehydrogenase family. As to quaternary structure, homotetramer. FAD is required as a cofactor.

The catalysed reaction is 2-methylbutanoyl-CoA + oxidized [electron-transfer flavoprotein] + H(+) = (2E)-2-methylbut-2-enoyl-CoA + reduced [electron-transfer flavoprotein]. It functions in the pathway lipid metabolism; mitochondrial fatty acid beta-oxidation. Its pathway is amino-acid degradation; L-isoleucine degradation. In terms of biological role, probable short and branched chain specific acyl-CoA dehydrogenase that catalyzes the removal of one hydrogen from C-2 and C-3 of the fatty acyl-CoA thioester, resulting in the formation of trans-2-enoyl-CoA. The sequence is that of Probable short/branched chain specific acyl-CoA dehydrogenase (acadsb) from Dictyostelium discoideum (Social amoeba).